We begin with the raw amino-acid sequence, 307 residues long: Acyl transferase (307 aa).

Catalysis depends on charge relay system residues Ser116, Asp213, and His243.

Belongs to the LuxD family.

Its pathway is lipid metabolism; fatty acid reduction for biolumincescence. In terms of biological role, acyl transferase is part of the fatty acid reductase system required for aldehyde biosynthesis; it produces fatty acids for the luminescent reaction. In Aliivibrio fischeri (strain MJ11) (Vibrio fischeri), this protein is Acyl transferase.